Consider the following 167-residue polypeptide: Lipoprotein signal peptidase (167 aa).

A run of 3 helical transmembrane segments spans residues 10–30, 68–88, and 98–118; these read LIWLLLSAVVIGLDQWSKAWV, WQLWFFTALAVGISGLLAFWL, and SAVPYALVIGGAIGNVIDRLM. Catalysis depends on residues D124 and D142. The helical transmembrane segment at 138–158 threads the bilayer; that stretch reads FNIADSAIVGGAIGIALFGLF.

This sequence belongs to the peptidase A8 family.

The protein localises to the cell inner membrane. It carries out the reaction Release of signal peptides from bacterial membrane prolipoproteins. Hydrolyzes -Xaa-Yaa-Zaa-|-(S,diacylglyceryl)Cys-, in which Xaa is hydrophobic (preferably Leu), and Yaa (Ala or Ser) and Zaa (Gly or Ala) have small, neutral side chains.. The protein operates within protein modification; lipoprotein biosynthesis (signal peptide cleavage). This protein specifically catalyzes the removal of signal peptides from prolipoproteins. The sequence is that of Lipoprotein signal peptidase from Xanthomonas campestris pv. campestris (strain 8004).